Reading from the N-terminus, the 1245-residue chain is Nidogen-1 (1245 aa).

A signal peptide spans 1-28; the sequence is MLDASGCSWAMWTWALLQLLLLVGPGGC. The NIDO domain occupies 106 to 268; the sequence is PFLADLDTTD…GVWVFEIGSP (163 aa). A glycan (N-linked (GlcNAc...) asparagine) is linked at Asn-187. Sulfotyrosine occurs at positions 290 and 295. Thr-299 is a glycosylation site (O-linked (GalNAc...) threonine). A disordered region spans residues 307–344; sequence VATPSPSHSPRRGYPDPHNVPRILSPGYEATERPRGVP. Ser-331 carries an O-linked (GalNAc...) serine glycan. Thr-337 and Thr-345 each carry an O-linked (GalNAc...) threonine glycan. A glycan (O-linked (GalNAc...) threonine; partial) is linked at Thr-348. The EGF-like 1 domain maps to 384-424; it reads SQQTCANNRHQCSVHAECRDYATGFCCRCVANYTGNGRQCV. Cystine bridges form between Cys-388–Cys-401, Cys-395–Cys-410, Cys-409–Cys-616, Cys-412–Cys-423, Cys-670–Cys-683, Cys-677–Cys-693, Cys-695–Cys-706, Cys-712–Cys-725, Cys-719–Cys-734, Cys-736–Cys-748, Cys-760–Cys-775, Cys-767–Cys-785, Cys-787–Cys-798, Cys-804–Cys-815, Cys-809–Cys-824, Cys-826–Cys-837, Cys-847–Cys-876, Cys-887–Cys-894, and Cys-896–Cys-917. N-linked (GlcNAc...) asparagine glycosylation occurs at Asn-415. The Nidogen G2 beta-barrel domain occupies 428–665; that stretch reads SPQRVNGKVK…GPVRDGSPDA (238 aa). The 42-residue stretch at 666 to 707 folds into the EGF-like 2 domain; the sequence is LQNPCYIGTHGCDSNAACRPGPGTQFTCECSIGFRGDGQTCY. The Cell attachment site signature appears at 700–702; sequence RGD. Positions 708 to 749 constitute an EGF-like 3; calcium-binding domain; it reads DIDECSEQPSRCGNHAVCNNLPGTFRCECVEGYHFSDRGTCV. The 44-residue stretch at 756–799 folds into the EGF-like 4 domain; the sequence is PINYCETGLHNCDIPQRAQCIYMGGSSYTCSCLPGFSGDGRACR. One can recognise an EGF-like 5; calcium-binding domain in the interval 800-838; sequence DVDECQHSRCHPDAFCYNTPGSFTCQCKPGYQGDGFRCM. One can recognise a Thyroglobulin type-1 domain in the interval 844-917; sequence KTRCQLEREH…RTPPGMRPPC (74 aa). 2 O-linked (GalNAc...) threonine glycosylation sites follow: Thr-920 and Thr-933. LDL-receptor class B repeat units lie at residues 988–1030, 1031–1073, 1074–1118, and 1119–1160; these read KVVY…DHLG, RTIF…DPVR, GNLY…DAFS, and SQLC…YGKN. An EGF-like 6 domain is found at 1206-1242; the sequence is GHNYCSVNNGGCTHLCLPTPGSRTCRCPDNTLGVDCI. Cystine bridges form between Cys-1210/Cys-1221, Cys-1217/Cys-1230, and Cys-1232/Cys-1241.

As to quaternary structure, interacts with FBLN1. Interacts with LGALS3BP. Interacts with PLXDC1. Interacts with SVEP1. In terms of processing, N- and O-glycosylated.

It is found in the secreted. Its subcellular location is the extracellular space. The protein localises to the extracellular matrix. The protein resides in the basement membrane. Sulfated glycoprotein widely distributed in basement membranes and tightly associated with laminin. Also binds to collagen IV and perlecan. It probably has a role in cell-extracellular matrix interactions. This Mus musculus (Mouse) protein is Nidogen-1 (Nid1).